A 349-amino-acid chain; its full sequence is tRNA pseudouridine synthase D (349 aa).

Position 27 (Phe27) interacts with substrate. Asp80 serves as the catalytic Nucleophile. Position 129 (Asn129) interacts with substrate. Residues 155 to 303 form the TRUD domain; it reads GVPNYFGAQR…VEAARRAMLL (149 aa). Phe329 contributes to the substrate binding site.

The protein belongs to the pseudouridine synthase TruD family.

It carries out the reaction uridine(13) in tRNA = pseudouridine(13) in tRNA. In terms of biological role, responsible for synthesis of pseudouridine from uracil-13 in transfer RNAs. The sequence is that of tRNA pseudouridine synthase D from Escherichia coli O81 (strain ED1a).